The chain runs to 717 residues: Proline-rich receptor-like protein kinase PERK2 (717 aa).

A compositionally biased stretch (pro residues) spans Met-1–Ser-197. The interval Met-1 to Lys-221 is disordered. Over Met-1–Met-228 the chain is Extracellular. Residues Pro-198–Ser-220 show a composition bias toward low complexity. The chain crosses the membrane as a helical span at residues Val-229–Leu-249. Over Cys-250–Gly-717 the chain is Cytoplasmic. Positions Asn-258–Val-323 are disordered. The segment covering Val-289–Pro-303 has biased composition (pro residues). The segment covering Ser-307–Ser-322 has biased composition (low complexity). Residues Phe-354–Ile-631 form the Protein kinase domain. Residues Leu-360–Val-368 and Lys-382 each bind ATP. The active-site Proton acceptor is Asp-478. Polar residues-rich tracts occupy residues Ser-632–His-644 and Ser-692–Ala-705. Disordered stretches follow at residues Ser-632–Gly-665 and Tyr-690–Gly-717.

Belongs to the protein kinase superfamily. Ser/Thr protein kinase family. In terms of tissue distribution, mostly expressed in inflorescence bolt, flower buds and siliques, and, to a lower extent, in roots, seedlings and leaves.

The protein resides in the cell membrane. The catalysed reaction is L-seryl-[protein] + ATP = O-phospho-L-seryl-[protein] + ADP + H(+). The enzyme catalyses L-threonyl-[protein] + ATP = O-phospho-L-threonyl-[protein] + ADP + H(+). The protein is Proline-rich receptor-like protein kinase PERK2 (PERK2) of Arabidopsis thaliana (Mouse-ear cress).